We begin with the raw amino-acid sequence, 388 residues long: S-adenosylmethionine synthase (388 aa).

Histidine 17 serves as a coordination point for ATP. Mg(2+) is bound at residue aspartate 19. A K(+)-binding site is contributed by glutamate 45. 2 residues coordinate L-methionine: glutamate 58 and glutamine 102. A flexible loop region spans residues 102–112 (QSADIAQGVDA). ATP-binding positions include 167-169 (DSK), 232-233 (RF), aspartate 241, 247-248 (RK), alanine 264, and lysine 268. Residue aspartate 241 coordinates L-methionine. Lysine 272 contacts L-methionine.

It belongs to the AdoMet synthase family. In terms of assembly, homotetramer; dimer of dimers. Mg(2+) is required as a cofactor. It depends on K(+) as a cofactor.

The protein resides in the cytoplasm. It catalyses the reaction L-methionine + ATP + H2O = S-adenosyl-L-methionine + phosphate + diphosphate. It functions in the pathway amino-acid biosynthesis; S-adenosyl-L-methionine biosynthesis; S-adenosyl-L-methionine from L-methionine: step 1/1. In terms of biological role, catalyzes the formation of S-adenosylmethionine (AdoMet) from methionine and ATP. The overall synthetic reaction is composed of two sequential steps, AdoMet formation and the subsequent tripolyphosphate hydrolysis which occurs prior to release of AdoMet from the enzyme. The polypeptide is S-adenosylmethionine synthase (Paramagnetospirillum magneticum (strain ATCC 700264 / AMB-1) (Magnetospirillum magneticum)).